We begin with the raw amino-acid sequence, 99 residues long: Plastocyanin (99 aa).

One can recognise a Plastocyanin-like domain in the interval 1-99; sequence IEVLLGGGDG…AGMVGKVTVN (99 aa). Cu cation is bound by residues His37, Cys84, His87, and Met92.

Belongs to the plastocyanin family. The cofactor is Cu(2+).

The protein localises to the plastid. Its subcellular location is the chloroplast thylakoid membrane. In terms of biological role, participates in electron transfer between P700 and the cytochrome b6-f complex in photosystem I. This Capsella bursa-pastoris (Shepherd's purse) protein is Plastocyanin (PETE).